The following is a 438-amino-acid chain: Thymidine phosphorylase (438 aa).

This sequence belongs to the thymidine/pyrimidine-nucleoside phosphorylase family. Homodimer.

It catalyses the reaction thymidine + phosphate = 2-deoxy-alpha-D-ribose 1-phosphate + thymine. It functions in the pathway pyrimidine metabolism; dTMP biosynthesis via salvage pathway; dTMP from thymine: step 1/2. In terms of biological role, the enzymes which catalyze the reversible phosphorolysis of pyrimidine nucleosides are involved in the degradation of these compounds and in their utilization as carbon and energy sources, or in the rescue of pyrimidine bases for nucleotide synthesis. The polypeptide is Thymidine phosphorylase (Burkholderia orbicola (strain AU 1054)).